The chain runs to 296 residues: Myeloid differentiation primary response protein MyD88 (296 aa).

The Death domain occupies Met54–Ile109. Residues Glu110 to Gly155 are intermediate domain. The TIR domain maps to Glu159–Leu293. A Phosphoserine modification is found at Ser244.

Homodimer. Also forms heterodimers with TIRAP. Binds to TLR2, TLR5, IRAK1, IRAK2 and IRAK4 via their respective TIR domains. Interacts with IL18R1. Interacts with BMX, IL1RL1, IKBKE and IRF7. Interacts with LRRFIP1 and LRRFIP2; this interaction positively regulates Toll-like receptor (TLR) signaling in response to agonist. Interacts with FLII. LRRFIP1 and LRRFIP2 compete with FLII for MYD88-binding. Interacts with IRF1. Upon IL1B treatment, forms a complex with PELI1, IRAK1, IRAK4 and TRAF6; this complex recruits MAP3K7/TAK1, TAB1 and TAB2 to mediate NF-kappa-B activation. Direct binding of SMAD6 to PELI1 prevents the complex formation and hence negatively regulates IL1R-TLR signaling and eventually NF-kappa-B-mediated gene expression. May interact with PIK3AP1. Interacts (via TIR domain) with DHX9 (via H2A and OB-fold regions); this interaction is direct. Interacts with OTUD4 deubiquitinase; the interaction is direct. Interacts with TLR4. As to quaternary structure, (Microbial infection) In case of infection, interacts with uropathogenic E.coli protein TcpC; suppressing Toll-like receptor (TLR)-mediated cytokine production. In terms of assembly, (Microbial infection) In case of infection, interacts with uropathogenic E.faecalis protein TcpF; suppressing Toll-like receptor (TLR)-mediated cytokine production. (Microbial infection) In case of infection, interacts with B.melitensis protein TcpB. As to quaternary structure, (Microbial infection) Interacts with human metapneumovirus protein M2-2; this interaction prevents MYD88-mediated cytokine secretion. In terms of processing, ubiquitinated; undergoes 'Lys-63'-linked polyubiquitination. OTUD4 specifically hydrolyzes 'Lys-63'-linked polyubiquitinated MYD88. Deubiquitinated by USP3 that cleaves 'Lys-63'-linked ubiquitin chains leading to inhibition of MYD88-induced NF-kappa-B signaling. Post-translationally, (Microbial infection) Ubiquitinated by human herpesvirus 8 (KSHV) protein RTA/ORF50, leading to proteasomal degradation ans suppression of TLR4 signaling pathway. Ubiquitous.

It is found in the cytoplasm. The protein localises to the nucleus. In terms of biological role, adapter protein involved in the Toll-like receptor and IL-1 receptor signaling pathway in the innate immune response. Acts via IRAK1, IRAK2, IRF7 and TRAF6, leading to NF-kappa-B activation, cytokine secretion and the inflammatory response. Increases IL-8 transcription. Involved in IL-18-mediated signaling pathway. Activates IRF1 resulting in its rapid migration into the nucleus to mediate an efficient induction of IFN-beta, NOS2/INOS, and IL12A genes. Upon TLR8 activation by GU-rich single-stranded RNA (GU-rich RNA) derived from viruses such as SARS-CoV-2, SARS-CoV and HIV-1, induces IL1B release through NLRP3 inflammasome activation. MyD88-mediated signaling in intestinal epithelial cells is crucial for maintenance of gut homeostasis and controls the expression of the antimicrobial lectin REG3G in the small intestine. This Homo sapiens (Human) protein is Myeloid differentiation primary response protein MyD88.